Reading from the N-terminus, the 873-residue chain is DNA mismatch repair protein MutS (873 aa).

620–627 (GPNMAGKS) contacts ATP.

This sequence belongs to the DNA mismatch repair MutS family.

In terms of biological role, this protein is involved in the repair of mismatches in DNA. It is possible that it carries out the mismatch recognition step. This protein has a weak ATPase activity. This chain is DNA mismatch repair protein MutS, found in Ruminiclostridium cellulolyticum (strain ATCC 35319 / DSM 5812 / JCM 6584 / H10) (Clostridium cellulolyticum).